The chain runs to 173 residues: Crossover junction endodeoxyribonuclease RuvC (173 aa).

Residues aspartate 8, glutamate 67, and aspartate 139 contribute to the active site. The Mg(2+) site is built by aspartate 8, glutamate 67, and aspartate 139.

It belongs to the RuvC family. As to quaternary structure, homodimer which binds Holliday junction (HJ) DNA. The HJ becomes 2-fold symmetrical on binding to RuvC with unstacked arms; it has a different conformation from HJ DNA in complex with RuvA. In the full resolvosome a probable DNA-RuvA(4)-RuvB(12)-RuvC(2) complex forms which resolves the HJ. Mg(2+) is required as a cofactor.

It is found in the cytoplasm. The enzyme catalyses Endonucleolytic cleavage at a junction such as a reciprocal single-stranded crossover between two homologous DNA duplexes (Holliday junction).. Its function is as follows. The RuvA-RuvB-RuvC complex processes Holliday junction (HJ) DNA during genetic recombination and DNA repair. Endonuclease that resolves HJ intermediates. Cleaves cruciform DNA by making single-stranded nicks across the HJ at symmetrical positions within the homologous arms, yielding a 5'-phosphate and a 3'-hydroxyl group; requires a central core of homology in the junction. The consensus cleavage sequence is 5'-(A/T)TT(C/G)-3'. Cleavage occurs on the 3'-side of the TT dinucleotide at the point of strand exchange. HJ branch migration catalyzed by RuvA-RuvB allows RuvC to scan DNA until it finds its consensus sequence, where it cleaves and resolves the cruciform DNA. The protein is Crossover junction endodeoxyribonuclease RuvC of Erwinia tasmaniensis (strain DSM 17950 / CFBP 7177 / CIP 109463 / NCPPB 4357 / Et1/99).